The chain runs to 139 residues: Putative nickel-responsive regulator (139 aa).

Residues H79, H90, H92, and C98 each coordinate Ni(2+).

The protein belongs to the transcriptional regulatory CopG/NikR family. It depends on Ni(2+) as a cofactor.

Functionally, transcriptional regulator. This chain is Putative nickel-responsive regulator, found in Solibacter usitatus (strain Ellin6076).